The following is a 176-amino-acid chain: Inner membrane-spanning protein YciB (176 aa).

5 helical membrane-spanning segments follow: residues 24 to 44, 49 to 69, 76 to 96, 119 to 139, and 149 to 169; these read TATA…AFRH, PMLW…LVLH, WKPT…QLAF, LSVV…FVAY, and FKLF…SLWL.

Belongs to the YciB family.

The protein localises to the cell inner membrane. Functionally, plays a role in cell envelope biogenesis, maintenance of cell envelope integrity and membrane homeostasis. This is Inner membrane-spanning protein YciB from Paraburkholderia phytofirmans (strain DSM 17436 / LMG 22146 / PsJN) (Burkholderia phytofirmans).